Consider the following 234-residue polypeptide: Small ribosomal subunit protein uS5 (234 aa).

The segment covering 1–10 (MEDIKTTTPE) has biased composition (polar residues). Residues 1–69 (MEDIKTTTPE…KDGSGNKPNK (69 aa)) form a disordered region. Basic and acidic residues predominate over residues 11-31 (VKNEENKTSEVKEGKALEKNN). An S5 DRBM domain is found at 78–141 (LEEKIVGVKK…KSAKNNMYKV (64 aa)).

It belongs to the universal ribosomal protein uS5 family. As to quaternary structure, part of the 30S ribosomal subunit. Contacts proteins S4 and S8.

With S4 and S12 plays an important role in translational accuracy. Functionally, located at the back of the 30S subunit body where it stabilizes the conformation of the head with respect to the body. This Malacoplasma penetrans (strain HF-2) (Mycoplasma penetrans) protein is Small ribosomal subunit protein uS5.